Reading from the N-terminus, the 75-residue chain is Small ribosomal subunit protein bS18 (75 aa).

Belongs to the bacterial ribosomal protein bS18 family. In terms of assembly, part of the 30S ribosomal subunit. Forms a tight heterodimer with protein bS6.

In terms of biological role, binds as a heterodimer with protein bS6 to the central domain of the 16S rRNA, where it helps stabilize the platform of the 30S subunit. The sequence is that of Small ribosomal subunit protein bS18 from Shewanella halifaxensis (strain HAW-EB4).